The chain runs to 129 residues: Glycine cleavage system H protein (129 aa).

Residues 24 to 106 (TYTVGITEHA…YAGGWIFKIK (83 aa)) enclose the Lipoyl-binding domain. Residue lysine 65 is modified to N6-lipoyllysine.

Belongs to the GcvH family. In terms of assembly, the glycine cleavage system is composed of four proteins: P, T, L and H. (R)-lipoate serves as cofactor.

Its function is as follows. The glycine cleavage system catalyzes the degradation of glycine. The H protein shuttles the methylamine group of glycine from the P protein to the T protein. This Escherichia coli O45:K1 (strain S88 / ExPEC) protein is Glycine cleavage system H protein.